The chain runs to 239 residues: Octanoyltransferase (239 aa).

Positions 48–236 (DGGDELVWLV…AFEAVFGETT (189 aa)) constitute a BPL/LPL catalytic domain. Residues 87–94 (RGGEYTYH), 167–169 (ALG), and 180–182 (GLS) contribute to the substrate site. The active-site Acyl-thioester intermediate is the Cys198.

The protein belongs to the LipB family.

It localises to the cytoplasm. The catalysed reaction is octanoyl-[ACP] + L-lysyl-[protein] = N(6)-octanoyl-L-lysyl-[protein] + holo-[ACP] + H(+). It participates in protein modification; protein lipoylation via endogenous pathway; protein N(6)-(lipoyl)lysine from octanoyl-[acyl-carrier-protein]: step 1/2. Functionally, catalyzes the transfer of endogenously produced octanoic acid from octanoyl-acyl-carrier-protein onto the lipoyl domains of lipoate-dependent enzymes. Lipoyl-ACP can also act as a substrate although octanoyl-ACP is likely to be the physiological substrate. This is Octanoyltransferase from Rhizobium johnstonii (strain DSM 114642 / LMG 32736 / 3841) (Rhizobium leguminosarum bv. viciae).